Reading from the N-terminus, the 297-residue chain is Undecaprenyl-diphosphatase 3 (297 aa).

6 helical membrane-spanning segments follow: residues 39–59 (PGAA…LIYF), 89–109 (WLVL…QDAI), 118–138 (LIAT…WYAS), 203–223 (FLLA…SIGG), 237–257 (PTIV…AWFL), and 268–288 (FVLY…GGAI).

Belongs to the UppP family.

The protein resides in the cell membrane. The catalysed reaction is di-trans,octa-cis-undecaprenyl diphosphate + H2O = di-trans,octa-cis-undecaprenyl phosphate + phosphate + H(+). Functionally, catalyzes the dephosphorylation of undecaprenyl diphosphate (UPP). Confers resistance to bacitracin. This is Undecaprenyl-diphosphatase 3 from Frankia alni (strain DSM 45986 / CECT 9034 / ACN14a).